Here is a 278-residue protein sequence, read N- to C-terminus: Large ribosomal subunit protein uL24m (278 aa).

A KOW domain is found at 109–142 (FFPGDLVQVMVGKDKGRQGLVLTISRDSSEVVVD).

The protein belongs to the universal ribosomal protein uL24 family.

It localises to the mitochondrion. The sequence is that of Large ribosomal subunit protein uL24m (mrpl-24) from Caenorhabditis briggsae.